The sequence spans 636 residues: Eukaryotic peptide chain release factor GTP-binding subunit ERF3A (636 aa).

Gly residues-rich tracts occupy residues 1-16 and 103-116; these read MDPS…GGGS and AAGG…GAGG. Disordered stretches follow at residues 1-54 and 90-206; these read MDPS…AAVA and LRGP…PPGA. Polar residues predominate over residues 121–138; the sequence is VESSQDQSCEGSNSTVSM. Residues 183–193 show a composition bias toward acidic residues; sequence STQEMMEEEEE. Residues 209–435 enclose the tr-type G domain; it reads KEHVNVVFIG…DNLPNFNRSV (227 aa). Positions 218 to 225 are G1; sequence GHVDAGKS. 221 to 226 is a binding site for GTP; sequence DAGKST. The segment at 274–278 is G2; it reads GKTVE. Positions 295–298 are G3; that stretch reads DAPG. GTP is bound by residues 357–360 and 399–401; these read NKMD and SGL. Residues 357–360 form a G4 region; it reads NKMD. Residues 399–401 form a G5 region; sequence SGL.

This sequence belongs to the TRAFAC class translation factor GTPase superfamily. Classic translation factor GTPase family. ERF3 subfamily. As to quaternary structure, component of the eRF1-eRF3-GTP ternary complex, composed of ETF1/ERF1 and ERF3 (GSPT1/ERF3A or GSPT2/ERF3B) and GTP. Component of the transient SURF (SMG1-UPF1-eRF1-eRF3) complex. The ETF1-GSPT1 complex interacts with JMJD4. Interacts with PABPC1. Interacts with SHFL.

It catalyses the reaction GTP + H2O = GDP + phosphate + H(+). Its function is as follows. GTPase component of the eRF1-eRF3-GTP ternary complex, a ternary complex that mediates translation termination in response to the termination codons UAA, UAG and UGA. GSPT1/ERF3A mediates ETF1/ERF1 delivery to stop codons: The eRF1-eRF3-GTP complex binds to a stop codon in the ribosomal A-site. GTP hydrolysis by GSPT1/ERF3A induces a conformational change that leads to its dissociation, permitting ETF1/ERF1 to accommodate fully in the A-site. Component of the transient SURF complex which recruits UPF1 to stalled ribosomes in the context of nonsense-mediated decay (NMD) of mRNAs containing premature stop codons. Required for SHFL-mediated translation termination which inhibits programmed ribosomal frameshifting (-1PRF) of mRNA from viruses and cellular genes. The chain is Eukaryotic peptide chain release factor GTP-binding subunit ERF3A (Gspt1) from Mus musculus (Mouse).